We begin with the raw amino-acid sequence, 512 residues long: 2-isopropylmalate synthase (512 aa).

In terms of domain architecture, Pyruvate carboxyltransferase spans 5-268; sequence LIIFDTTLRD…DVDIETQHIL (264 aa). Residues D14, H202, H204, and N239 each coordinate Mn(2+). Residues 394–512 are regulatory domain; that stretch reads SFVSLSQHSE…SKADRVAAQG (119 aa).

Belongs to the alpha-IPM synthase/homocitrate synthase family. LeuA type 1 subfamily. Homodimer. It depends on Mn(2+) as a cofactor.

It is found in the cytoplasm. It carries out the reaction 3-methyl-2-oxobutanoate + acetyl-CoA + H2O = (2S)-2-isopropylmalate + CoA + H(+). The protein operates within amino-acid biosynthesis; L-leucine biosynthesis; L-leucine from 3-methyl-2-oxobutanoate: step 1/4. In terms of biological role, catalyzes the condensation of the acetyl group of acetyl-CoA with 3-methyl-2-oxobutanoate (2-ketoisovalerate) to form 3-carboxy-3-hydroxy-4-methylpentanoate (2-isopropylmalate). The sequence is that of 2-isopropylmalate synthase from Albidiferax ferrireducens (strain ATCC BAA-621 / DSM 15236 / T118) (Rhodoferax ferrireducens).